We begin with the raw amino-acid sequence, 858 residues long: Leucine--tRNA ligase (858 aa).

Positions 42 to 52 (PYPSGRLHMGH) match the 'HIGH' region motif. The short motif at 618-622 (KMSKS) is the 'KMSKS' region element. Residue K621 coordinates ATP.

The protein belongs to the class-I aminoacyl-tRNA synthetase family.

It is found in the cytoplasm. The catalysed reaction is tRNA(Leu) + L-leucine + ATP = L-leucyl-tRNA(Leu) + AMP + diphosphate. This Aeromonas salmonicida (strain A449) protein is Leucine--tRNA ligase.